Here is a 529-residue protein sequence, read N- to C-terminus: ATP synthase subunit alpha (529 aa).

173–180 (GDRQTGKT) is an ATP binding site.

The protein belongs to the ATPase alpha/beta chains family. In terms of assembly, F-type ATPases have 2 components, CF(1) - the catalytic core - and CF(0) - the membrane proton channel. CF(1) has five subunits: alpha(3), beta(3), gamma(1), delta(1), epsilon(1). CF(0) has three main subunits: a(1), b(2) and c(9-12). The alpha and beta chains form an alternating ring which encloses part of the gamma chain. CF(1) is attached to CF(0) by a central stalk formed by the gamma and epsilon chains, while a peripheral stalk is formed by the delta and b chains.

The protein resides in the cell membrane. The enzyme catalyses ATP + H2O + 4 H(+)(in) = ADP + phosphate + 5 H(+)(out). In terms of biological role, produces ATP from ADP in the presence of a proton gradient across the membrane. The alpha chain is a regulatory subunit. This Streptomyces avermitilis (strain ATCC 31267 / DSM 46492 / JCM 5070 / NBRC 14893 / NCIMB 12804 / NRRL 8165 / MA-4680) protein is ATP synthase subunit alpha.